We begin with the raw amino-acid sequence, 685 residues long: DNA-directed RNA polymerase subunit beta' (685 aa).

Positions 69, 71, 87, and 90 each coordinate Zn(2+). The Mg(2+) site is built by D492, D494, and D496.

Belongs to the RNA polymerase beta' chain family. RpoC1 subfamily. As to quaternary structure, in plastids the minimal PEP RNA polymerase catalytic core is composed of four subunits: alpha, beta, beta', and beta''. When a (nuclear-encoded) sigma factor is associated with the core the holoenzyme is formed, which can initiate transcription. It depends on Mg(2+) as a cofactor. Requires Zn(2+) as cofactor.

The protein localises to the plastid. It localises to the chloroplast. The enzyme catalyses RNA(n) + a ribonucleoside 5'-triphosphate = RNA(n+1) + diphosphate. Its function is as follows. DNA-dependent RNA polymerase catalyzes the transcription of DNA into RNA using the four ribonucleoside triphosphates as substrates. This Dioscorea elephantipes (Elephant's foot yam) protein is DNA-directed RNA polymerase subunit beta'.